The sequence spans 692 residues: Elongation factor G (692 aa).

In terms of domain architecture, tr-type G spans 8-283 (NRIRNIGIAA…AVIDYLPAPT (276 aa)). GTP is bound by residues 17–24 (AHIDAGKT), 81–85 (DTPGH), and 135–138 (NKMD).

The protein belongs to the TRAFAC class translation factor GTPase superfamily. Classic translation factor GTPase family. EF-G/EF-2 subfamily.

The protein resides in the cytoplasm. In terms of biological role, catalyzes the GTP-dependent ribosomal translocation step during translation elongation. During this step, the ribosome changes from the pre-translocational (PRE) to the post-translocational (POST) state as the newly formed A-site-bound peptidyl-tRNA and P-site-bound deacylated tRNA move to the P and E sites, respectively. Catalyzes the coordinated movement of the two tRNA molecules, the mRNA and conformational changes in the ribosome. In Helicobacter pylori (strain ATCC 700392 / 26695) (Campylobacter pylori), this protein is Elongation factor G (fusA).